Here is a 154-residue protein sequence, read N- to C-terminus: Superoxide dismutase [Cu-Zn] (154 aa).

Positions 47, 49, and 64 each coordinate Cu cation. A disulfide bridge connects residues C58 and C147. Zn(2+) is bound by residues H64, H72, H81, and D84. H121 contributes to the Cu cation binding site. Residues 125-136 are compositionally biased toward basic and acidic residues; sequence DDLGKGGNEESL. A disordered region spans residues 125-144; sequence DDLGKGGNEESLKTGNAGPR. R144 provides a ligand contact to substrate.

The protein belongs to the Cu-Zn superoxide dismutase family. In terms of assembly, homodimer. It depends on Cu cation as a cofactor. Zn(2+) serves as cofactor.

The protein resides in the cytoplasm. The enzyme catalyses 2 superoxide + 2 H(+) = H2O2 + O2. Functionally, destroys radicals which are normally produced within the cells and which are toxic to biological systems. The polypeptide is Superoxide dismutase [Cu-Zn] (sod-1) (Neurospora crassa (strain ATCC 24698 / 74-OR23-1A / CBS 708.71 / DSM 1257 / FGSC 987)).